We begin with the raw amino-acid sequence, 347 residues long: NADH-ubiquinone oxidoreductase chain 2 (347 aa).

The next 10 helical transmembrane spans lie at 4 to 21 (LILS…LIVM), 26 to 45 (WLMV…PVLM), 59 to 79 (YFLT…INLI), 96 to 116 (IIMT…FWVP), 122 to 142 (IQLS…MSIL), 148 to 168 (AINM…GGWG), 201 to 221 (ALLN…TFML), 242 to 262 (TTIL…GFLP), 274 to 294 (DSII…YFYM), and 326 to 346 (LPPL…LMLL).

It belongs to the complex I subunit 2 family. Core subunit of respiratory chain NADH dehydrogenase (Complex I) which is composed of 45 different subunits. Interacts with TMEM242.

It is found in the mitochondrion inner membrane. It carries out the reaction a ubiquinone + NADH + 5 H(+)(in) = a ubiquinol + NAD(+) + 4 H(+)(out). Core subunit of the mitochondrial membrane respiratory chain NADH dehydrogenase (Complex I) which catalyzes electron transfer from NADH through the respiratory chain, using ubiquinone as an electron acceptor. Essential for the catalytic activity and assembly of complex I. This Syconycteris australis (Southern blossom bat) protein is NADH-ubiquinone oxidoreductase chain 2.